A 920-amino-acid chain; its full sequence is MAHGEPYYSSKPDKDFNFGSTMARRQMTPTMVTKLPKFVRNSPQVYDWIVRGLIFPTTGKTYFQRVVVITGGFEDGTYGSFAFDGREWVEIYPIEHLNLMSSLKLIHKANALQERLRLSQEEKATLTLDVQFLQHENVRLKELISKPEPRKIQMKWIIVGAVLTFLSLIPGGYAQSQTNNTIFTDVIAACKYSTETLTENLDLRIKLALANITISDKLDAVRQILNFAFVPRSHWLRTVFYYIHYYEMWNIFMFVLAIGTVMRSTRPGTDLITLATSHLSGFRMAVLPTIPFHTTMTLWVMNTLMVCYYFDNLLAITMAILAPILGIIFLCFMEDSNYVSQIRGLIATAVLIAGGHACLTLTGTTTSLFVVILTCRFVRMATIFIGTRFEIRDANGKVVATVPTRIKNAAFDFFQRLKQSGVRVGVNEFVVIKPGALCVIDTPEGKGTGFFSGNDIVTAAHVVGNNTFVNVCYEGLMYEAKVRYMPEKDIAFITCPGDLHPTARLKLSKNPDYSCVTVMAYVNEDLVVSTAAAMVHGNTLSYAVRTQDGMSGAPVCDKYGRVLAVHQTNTGYTGGAVIIDPADFHPVKAPSQVELLKEEIERLKAQLNSAAENPSTVITQQPTATLEQKSVNDSDVVDLVRTAMEREMKILRDEINGILAPFLQKKKGKTKHGRGRVRRNLRKGVKLLTEEEYRELLEKGLDRETFLDLIDRIIGERSGYPDYDDEDYYDEDDDGWGMVGDDVEFDYTEVINFDQAKPTPAPRTTKPKPCPEPEAETQPLDLSQKKDKQLEHEQQVVKPTKPQKNDPQPYSQTYGKAPIWESYDFDWDEDDAKFILPAPPRLTKADEIVLGSKIVKLRTIIETAIKTQNYSALPEAVFELDKAAYEAGLEGFLQRVKSKNKAPKNYKGPQKTKGPKTIIH.

Transmembrane regions (helical) follow at residues 239–259 (VFYYIHYYEMWNIFMFVLAIG), 286–306 (VLPTIPFHTTMTLWVMNTLMV), 313–333 (LLAITMAILAPILGIIFLCFM), and 344–364 (GLIATAVLIAGGHACLTLTGT). Residues histidine 461, aspartate 489, and serine 551 each act as charge relay system; for serine protease activity in the active site. The residue at position 693 (tyrosine 693) is an O-(5'-phospho-RNA)-tyrosine. Disordered stretches follow at residues 752-815 (NFDQ…QTYG) and 900-920 (NKAPKNYKGPQKTKGPKTIIH). Residues 783–795 (SQKKDKQLEHEQQ) show a composition bias toward basic and acidic residues. Over residues 805 to 814 (NDPQPYSQTY) the composition is skewed to polar residues.

Belongs to the astroviridae polyprotein 1A family. In terms of assembly, monomer. In terms of processing, cleaved by the viral and host proteases. The protease is probably autocatalytically cleaved.

It localises to the host membrane. It catalyses the reaction RNA(n) + a ribonucleoside 5'-triphosphate = RNA(n+1) + diphosphate. In terms of biological role, responsible for the cleavage of the polyprotein into functional products. Its function is as follows. Protein covalently attached to the 5' extremity of the genomic and subgenomic RNAs. It may serve as a primer for the replicase. The protein is Non-structural polyprotein 1A (ORF1) of Homo sapiens (Human).